The chain runs to 132 residues: UPF0292 protein PYRAB04740 (132 aa).

Residues 20–100 (DGAIIVEGPR…KVDTETRRSL (81 aa)) enclose the Toprim domain. Mg(2+) is bound by residues glutamate 26, aspartate 69, and aspartate 71.

It belongs to the UPF0292 family. It depends on Mg(2+) as a cofactor.

This Pyrococcus abyssi (strain GE5 / Orsay) protein is UPF0292 protein PYRAB04740.